The chain runs to 550 residues: Methionine--tRNA ligase (550 aa).

The 'HIGH' region motif lies at 13-23 (PYANGPLHFGH). Residues cysteine 145, cysteine 148, cysteine 158, and cysteine 161 each coordinate Zn(2+). The 'KMSKS' region signature appears at 331–335 (QFSKS). Position 334 (lysine 334) interacts with ATP.

Belongs to the class-I aminoacyl-tRNA synthetase family. MetG type 1 subfamily. In terms of assembly, monomer. The cofactor is Zn(2+).

The protein localises to the cytoplasm. It catalyses the reaction tRNA(Met) + L-methionine + ATP = L-methionyl-tRNA(Met) + AMP + diphosphate. In terms of biological role, is required not only for elongation of protein synthesis but also for the initiation of all mRNA translation through initiator tRNA(fMet) aminoacylation. The sequence is that of Methionine--tRNA ligase (metG) from Chlamydia muridarum (strain MoPn / Nigg).